The primary structure comprises 557 residues: Acid-sensing ion channel 1B (557 aa).

At 1–98 (MVRITCTISF…SIRQGLWALV (98 aa)) the chain is on the cytoplasmic side. Positions 36-45 (KDGEQGKYQE) are enriched in basic and acidic residues. The disordered stretch occupies residues 36–57 (KDGEQGKYQEEGDDPDAYDGPE). Residues 46 to 57 (EGDDPDAYDGPE) are compositionally biased toward acidic residues. The chain crosses the membrane as a helical span at residues 99 to 115 (FLLAISMFLLQVVDRVI). The Extracellular portion of the chain corresponds to 116–460 (YYLQYDYVTL…ETIEQKKAYE (345 aa)). Residues N133 and N194 are each glycosylated (N-linked (GlcNAc...) asparagine). Disulfide bonds link C142/C229, C207/C214, C325/C400, C343/C396, C347/C394, C356/C378, and C358/C370. 2 N-linked (GlcNAc...) asparagine glycosylation sites follow: N401 and N428. Residues 461-491 (LAGLLGDIGGQMGLFIGASILTILELFDYLY) traverse the membrane as a discontinuously helical segment. The GAS motif; ion selectivity filter signature appears at 477 to 479 (GAS). The Cytoplasmic portion of the chain corresponds to 492 to 557 (EVIKFKLCRC…GQGNFEDFTC (66 aa)).

It belongs to the amiloride-sensitive sodium channel (TC 1.A.6) family. ASIC1 subfamily. Homotrimer. Heterotrimer; with other ASIC proteins producing channel with different properties. As to expression, expressed in central nervous system.

It is found in the cell membrane. The protein localises to the postsynaptic cell membrane. Its subcellular location is the cell projection. It localises to the dendrite. The catalysed reaction is Na(+)(in) = Na(+)(out). It catalyses the reaction K(+)(in) = K(+)(out). It carries out the reaction Li(+)(in) = Li(+)(out). The enzyme catalyses Ca(2+)(in) = Ca(2+)(out). With respect to regulation, inhibited by the diuretic drug amiloride. Forms voltage-independent, pH-gated trimeric sodium channels that act as postsynaptic excitatory receptors in the nervous system, playing a crucial role in regulating synaptic plasticity, learning, and memory. Upon extracellular pH drop this channel elicits transient, fast activating, and completely desensitizing inward currents. Displays high selectivity for sodium ions but can also permit the permeation of other cations. The sequence is that of Acid-sensing ion channel 1B (asic1b) from Danio rerio (Zebrafish).